The primary structure comprises 380 residues: Lipid-A-disaccharide synthase (380 aa).

Belongs to the LpxB family.

It catalyses the reaction a lipid X + a UDP-2-N,3-O-bis[(3R)-3-hydroxyacyl]-alpha-D-glucosamine = a lipid A disaccharide + UDP + H(+). It participates in bacterial outer membrane biogenesis; LPS lipid A biosynthesis. Functionally, condensation of UDP-2,3-diacylglucosamine and 2,3-diacylglucosamine-1-phosphate to form lipid A disaccharide, a precursor of lipid A, a phosphorylated glycolipid that anchors the lipopolysaccharide to the outer membrane of the cell. The sequence is that of Lipid-A-disaccharide synthase from Francisella philomiragia subsp. philomiragia (strain ATCC 25017 / CCUG 19701 / FSC 153 / O#319-036).